Here is a 99-residue protein sequence, read N- to C-terminus: Malonate decarboxylase acyl carrier protein (99 aa).

S25 bears the O-(phosphoribosyl dephospho-coenzyme A)serine mark.

Covalently binds the prosthetic group of malonate decarboxylase.

Its subcellular location is the cytoplasm. Its function is as follows. Subunit of malonate decarboxylase, it is an acyl carrier protein to which acetyl and malonyl thioester residues are bound via a 2'-(5''-phosphoribosyl)-3'-dephospho-CoA prosthetic group and turn over during the catalytic mechanism. This Klebsiella pneumoniae protein is Malonate decarboxylase acyl carrier protein (mdcC).